The chain runs to 295 residues: Indole-3-glycerol phosphate synthase (295 aa).

The protein belongs to the TrpC family.

The catalysed reaction is 1-(2-carboxyphenylamino)-1-deoxy-D-ribulose 5-phosphate + H(+) = (1S,2R)-1-C-(indol-3-yl)glycerol 3-phosphate + CO2 + H2O. The protein operates within amino-acid biosynthesis; L-tryptophan biosynthesis; L-tryptophan from chorismate: step 4/5. This chain is Indole-3-glycerol phosphate synthase, found in Prochlorococcus marinus (strain NATL1A).